We begin with the raw amino-acid sequence, 154 residues long: Transcriptional repressor NrdR (154 aa).

A zinc finger spans residues 3 to 34 (CPFCGANDTKVIDSRLVAEGEQVRRRRECLAC). An ATP-cone domain is found at 49–139 (PRLIKQDGSR…VYRRFQDLNE (91 aa)).

The protein belongs to the NrdR family. It depends on Zn(2+) as a cofactor.

Its function is as follows. Negatively regulates transcription of bacterial ribonucleotide reductase nrd genes and operons by binding to NrdR-boxes. The sequence is that of Transcriptional repressor NrdR from Pseudomonas syringae pv. syringae (strain B728a).